The sequence spans 283 residues: Probable endonuclease 4 (283 aa).

Residues histidine 69, histidine 109, glutamate 145, aspartate 179, histidine 182, histidine 216, aspartate 229, histidine 231, and glutamate 261 each contribute to the Zn(2+) site.

The protein belongs to the AP endonuclease 2 family. It depends on Zn(2+) as a cofactor.

It catalyses the reaction Endonucleolytic cleavage to 5'-phosphooligonucleotide end-products.. Functionally, endonuclease IV plays a role in DNA repair. It cleaves phosphodiester bonds at apurinic or apyrimidinic (AP) sites, generating a 3'-hydroxyl group and a 5'-terminal sugar phosphate. In Campylobacter concisus (strain 13826), this protein is Probable endonuclease 4.